A 410-amino-acid polypeptide reads, in one-letter code: Dipeptidase 1 (410 aa).

An N-terminal signal peptide occupies residues 1–16 (MWTSWWLWPLVAVCTA). Residues His36 and Asp38 each contribute to the Zn(2+) site. Asn57 carries N-linked (GlcNAc...) asparagine glycosylation. A disulfide bond links Cys87 and Cys170. Residue Glu141 participates in Zn(2+) binding. His168 contributes to the substrate binding site. Positions 214 and 235 each coordinate Zn(2+). Cysteines 242 and 274 form a disulfide. The substrate site is built by Arg246 and Asp304. Residue Ser384 is the site of GPI-anchor amidated serine attachment. Positions 385–410 (EAPSLHRRPGALLASLSLLLLSLGLL) are cleaved as a propeptide — removed in mature form.

Belongs to the metallo-dependent hydrolases superfamily. Peptidase M19 family. In terms of assembly, homodimer; disulfide-linked. The cofactor is Zn(2+).

The protein resides in the apical cell membrane. The protein localises to the cell projection. It is found in the microvillus membrane. The enzyme catalyses an L-aminoacyl-L-amino acid + H2O = 2 an L-alpha-amino acid. It catalyses the reaction leukotriene D4 + H2O = leukotriene E4 + glycine. It carries out the reaction L-cystine-bis-glycine + 2 H2O = L-cystine + 2 glycine. The catalysed reaction is a beta-lactam + H2O = a substituted beta-amino acid. The enzyme catalyses glycyldehydrophenylalanine + H2O = 2,3-didehydrophenylalanine + glycine. With respect to regulation, inhibited by L-penicillamine. Beta-lactamase activity is inhibited by cilastatin. In terms of biological role, hydrolyzes a wide range of dipeptides including the conversion of leukotriene D4 to leukotriene E4. Hydrolyzes cystinyl-bis-glycine (cys-bis-gly) formed during glutathione degradation. Also possesses beta lactamase activity and hydrolytically inactivates beta-lactam antibiotics. Functionally, independently of its dipeptidase activity, acts as an adhesion receptor for neutrophil recruitment from bloodstream into inflamed lungs and liver. In Oryctolagus cuniculus (Rabbit), this protein is Dipeptidase 1 (DPEP1).